Here is a 513-residue protein sequence, read N- to C-terminus: 2-isopropylmalate synthase (513 aa).

The 264-residue stretch at 5-268 (LIIFDTTLRD…DVGIDTTQIV (264 aa)) folds into the Pyruvate carboxyltransferase domain. Positions 14, 202, 204, and 239 each coordinate Mn(2+). Residues 394-513 (RFISLSQRSE…KAVQKINPQI (120 aa)) form a regulatory domain region.

The protein belongs to the alpha-IPM synthase/homocitrate synthase family. LeuA type 1 subfamily. Homodimer. Mn(2+) is required as a cofactor.

Its subcellular location is the cytoplasm. It carries out the reaction 3-methyl-2-oxobutanoate + acetyl-CoA + H2O = (2S)-2-isopropylmalate + CoA + H(+). Its pathway is amino-acid biosynthesis; L-leucine biosynthesis; L-leucine from 3-methyl-2-oxobutanoate: step 1/4. Its function is as follows. Catalyzes the condensation of the acetyl group of acetyl-CoA with 3-methyl-2-oxobutanoate (2-ketoisovalerate) to form 3-carboxy-3-hydroxy-4-methylpentanoate (2-isopropylmalate). This Cupriavidus metallidurans (strain ATCC 43123 / DSM 2839 / NBRC 102507 / CH34) (Ralstonia metallidurans) protein is 2-isopropylmalate synthase.